Here is a 399-residue protein sequence, read N- to C-terminus: Nitric oxide reductase (399 aa).

The segment at 32–221 is zinc metallo-hydrolase; that stretch reads HRGTTYNAYL…DEIQKINLAI (190 aa). The Fe cation site is built by H81, E83, D85, H148, D167, and H228. The 140-residue stretch at 255-394 folds into the Flavodoxin-like domain; it reads AVIAYDTMWL…RCYELGRKIA (140 aa).

The protein in the N-terminal section; belongs to the zinc metallo-hydrolase group 3 family. As to quaternary structure, homodimer. The cofactor is FMN. Requires Fe cation as cofactor.

In terms of biological role, has nitric oxide reductase activity in combination with Hrb; probably involved in nitrosative stress protection. This Moorella thermoacetica (strain ATCC 39073 / JCM 9320) protein is Nitric oxide reductase (fprA).